Reading from the N-terminus, the 132-residue chain is Probable histone H2A.1 (132 aa).

A disordered region spans residues 1 to 22 (MAGRGKTLGSGSAKKATTRSSK).

This sequence belongs to the histone H2A family. In terms of assembly, the nucleosome is a histone octamer containing two molecules each of H2A, H2B, H3 and H4 assembled in one H3-H4 heterotetramer and two H2A-H2B heterodimers. The octamer wraps approximately 147 bp of DNA. In terms of processing, not ubiquitinated. As to expression, low level of expression; mainly in roots. Found in the root cap cells and in non dividing tissues of the plant, including the root elongation and maturation zones and the leaf veins.

It is found in the nucleus. Its subcellular location is the chromosome. Core component of nucleosome. Nucleosomes wrap and compact DNA into chromatin, limiting DNA accessibility to the cellular machineries which require DNA as a template. Histones thereby play a central role in transcription regulation, DNA repair, DNA replication and chromosomal stability. DNA accessibility is regulated via a complex set of post-translational modifications of histones, also called histone code, and nucleosome remodeling. In Arabidopsis thaliana (Mouse-ear cress), this protein is Probable histone H2A.1.